The following is a 149-amino-acid chain: Large ribosomal subunit protein uL15 (149 aa).

A compositionally biased stretch (basic and acidic residues) spans Met-1–Arg-11. The tract at residues Met-1 to Arg-44 is disordered.

The protein belongs to the universal ribosomal protein uL15 family. In terms of assembly, part of the 50S ribosomal subunit.

Functionally, binds to the 23S rRNA. The polypeptide is Large ribosomal subunit protein uL15 (Corynebacterium jeikeium (strain K411)).